The following is a 131-amino-acid chain: Ribosome-binding factor A (131 aa).

Belongs to the RbfA family. Monomer. Binds 30S ribosomal subunits, but not 50S ribosomal subunits or 70S ribosomes.

Its subcellular location is the cytoplasm. Its function is as follows. One of several proteins that assist in the late maturation steps of the functional core of the 30S ribosomal subunit. Associates with free 30S ribosomal subunits (but not with 30S subunits that are part of 70S ribosomes or polysomes). Required for efficient processing of 16S rRNA. May interact with the 5'-terminal helix region of 16S rRNA. The chain is Ribosome-binding factor A from Ruegeria pomeroyi (strain ATCC 700808 / DSM 15171 / DSS-3) (Silicibacter pomeroyi).